The sequence spans 331 residues: 3-dehydroquinate synthase homolog (331 aa).

This sequence belongs to the archaeal-type DHQ synthase family.

In Aquifex aeolicus (strain VF5), this protein is 3-dehydroquinate synthase homolog.